The chain runs to 497 residues: Ankyrin repeat domain-containing protein 53 (497 aa).

Positions 1-10 are enriched in basic residues; the sequence is MRRPSRRRSK. Residues 1-65 are disordered; that stretch reads MRRPSRRRSK…VSSPNSESSQ (65 aa). Residues 12–27 show a composition bias toward low complexity; sequence STPPRSHTTPRRTGPS. Residues 28–39 are compositionally biased toward basic and acidic residues; sequence DSRRRPGTKEQP. ANK repeat units lie at residues 110 to 140, 144 to 177, and 181 to 210; these read KGFT…PVDL, KGQT…AINS, and NGST…NVHA. Positions 239–264 form a coiled coil; that stretch reads WKHDKKVLAQEMEKLRTLKEKLTILE.

In terms of assembly, interacts with PSRC1; recruited by PSRC1 to the spindle during mitosis. Phosphorylated during mitosis.

It localises to the cytoplasm. It is found in the cytoskeleton. Its subcellular location is the spindle. The protein resides in the spindle pole. Functionally, required for normal progression through mitosis. Involved in chromosome alignment and cytokinesis via regulation of microtubules polymerization. The protein is Ankyrin repeat domain-containing protein 53 (Ankrd53) of Mus musculus (Mouse).